Consider the following 234-residue polypeptide: Purine nucleoside phosphorylase DeoD-type (234 aa).

His-4 provides a ligand contact to a purine D-ribonucleoside. Residues Gly-20, Arg-24, Arg-43, and 87-90 each bind phosphate; that span reads RIGS. A purine D-ribonucleoside-binding positions include Glu-162, 179 to 181, and 203 to 204; these read EME and SD. Catalysis depends on Asp-204, which acts as the Proton donor.

The protein belongs to the PNP/UDP phosphorylase family. As to quaternary structure, homohexamer; trimer of homodimers.

It carries out the reaction a purine D-ribonucleoside + phosphate = a purine nucleobase + alpha-D-ribose 1-phosphate. The catalysed reaction is a purine 2'-deoxy-D-ribonucleoside + phosphate = a purine nucleobase + 2-deoxy-alpha-D-ribose 1-phosphate. Its function is as follows. Catalyzes the reversible phosphorolytic breakdown of the N-glycosidic bond in the beta-(deoxy)ribonucleoside molecules, with the formation of the corresponding free purine bases and pentose-1-phosphate. The polypeptide is Purine nucleoside phosphorylase DeoD-type (Roseobacter denitrificans (strain ATCC 33942 / OCh 114) (Erythrobacter sp. (strain OCh 114))).